Reading from the N-terminus, the 340-residue chain is Hydroxyurea phosphotransferase (340 aa).

The active-site Proton acceptor is the D240.

Belongs to the aminoglycoside phosphotransferase family.

Potential phosphotransferase that inactivates hydroxyurea by phosphorylation of the hydroxy group in the hydroxylamine moiety. In Kitasatospora aureofaciens (Streptomyces aureofaciens), this protein is Hydroxyurea phosphotransferase (hur).